The following is a 146-amino-acid chain: NADH-quinone oxidoreductase subunit A (146 aa).

3 consecutive transmembrane segments (helical) span residues 16–36 (FAIF…GGWF), 68–88 (FYLV…LFAW), and 98–118 (VGFV…VYLV).

This sequence belongs to the complex I subunit 3 family. In terms of assembly, NDH-1 is composed of 13 different subunits. Subunits NuoA, H, J, K, L, M, N constitute the membrane sector of the complex.

The protein resides in the cell inner membrane. The enzyme catalyses a quinone + NADH + 5 H(+)(in) = a quinol + NAD(+) + 4 H(+)(out). Functionally, NDH-1 shuttles electrons from NADH, via FMN and iron-sulfur (Fe-S) centers, to quinones in the respiratory chain. The immediate electron acceptor for the enzyme in this species is believed to be ubiquinone. Couples the redox reaction to proton translocation (for every two electrons transferred, four hydrogen ions are translocated across the cytoplasmic membrane), and thus conserves the redox energy in a proton gradient. This Enterobacter sp. (strain 638) protein is NADH-quinone oxidoreductase subunit A.